The following is a 484-amino-acid chain: Glutamate--tRNA ligase (484 aa).

Positions 11–21 (PSPTGYLHIGN) match the 'HIGH' region motif. A 'KMSKS' region motif is present at residues 252-256 (KLSKR). Lysine 255 provides a ligand contact to ATP.

This sequence belongs to the class-I aminoacyl-tRNA synthetase family. Glutamate--tRNA ligase type 1 subfamily. In terms of assembly, monomer.

It is found in the cytoplasm. It carries out the reaction tRNA(Glu) + L-glutamate + ATP = L-glutamyl-tRNA(Glu) + AMP + diphosphate. In terms of biological role, catalyzes the attachment of glutamate to tRNA(Glu) in a two-step reaction: glutamate is first activated by ATP to form Glu-AMP and then transferred to the acceptor end of tRNA(Glu). The sequence is that of Glutamate--tRNA ligase from Staphylococcus aureus (strain Newman).